The primary structure comprises 90 residues: Large ribosomal subunit protein bL31B-1 (90 aa).

It belongs to the bacterial ribosomal protein bL31 family. Type B subfamily. Part of the 50S ribosomal subunit.

In Streptomyces coelicolor (strain ATCC BAA-471 / A3(2) / M145), this protein is Large ribosomal subunit protein bL31B-1.